The sequence spans 172 residues: Allergen Bos d 2 (172 aa).

Positions 1-16 (MKAVFLTLLFGLVCTA) are cleaved as a signal peptide. The residue at position 17 (Gln-17) is a Pyrrolidone carboxylic acid. Cystine bridges form between Cys-60–Cys-64 and Cys-79–Cys-170.

The protein belongs to the calycin superfamily. Lipocalin family. Found exclusively in skin. Produced in sweat glands and transported to the skin surface.

The protein resides in the secreted. Functionally, probable pheromone carrier. This chain is Allergen Bos d 2, found in Bos taurus (Bovine).